A 431-amino-acid polypeptide reads, in one-letter code: Glucose-1-phosphate adenylyltransferase (431 aa).

Lysine 39 contacts beta-D-fructose 1,6-bisphosphate. AMP is bound by residues arginine 40, histidine 46, and arginine 52. Tyrosine 114 is an alpha-D-glucose 1-phosphate binding site. Arginine 130 provides a ligand contact to AMP. Alpha-D-glucose 1-phosphate-binding positions include glycine 179, 194-195, and serine 212; that span reads EK. AMP is bound by residues glutamate 370 and arginine 386. Beta-D-fructose 1,6-bisphosphate-binding positions include 419-423 and 429-431; these read REMLR and QER.

It belongs to the bacterial/plant glucose-1-phosphate adenylyltransferase family. As to quaternary structure, homotetramer.

It catalyses the reaction alpha-D-glucose 1-phosphate + ATP + H(+) = ADP-alpha-D-glucose + diphosphate. It participates in glycan biosynthesis; glycogen biosynthesis. Its activity is regulated as follows. Allosterically activated by fructose-1,6-bisphosphate (F16BP) and inhibited by AMP. In terms of biological role, involved in the biosynthesis of ADP-glucose, a building block required for the elongation reactions to produce glycogen. Catalyzes the reaction between ATP and alpha-D-glucose 1-phosphate (G1P) to produce pyrophosphate and ADP-Glc. This is Glucose-1-phosphate adenylyltransferase from Shigella boydii serotype 18 (strain CDC 3083-94 / BS512).